The following is a 455-amino-acid chain: Argininosuccinate lyase (455 aa).

This sequence belongs to the lyase 1 family. Argininosuccinate lyase subfamily.

The protein localises to the cytoplasm. It carries out the reaction 2-(N(omega)-L-arginino)succinate = fumarate + L-arginine. It participates in amino-acid biosynthesis; L-arginine biosynthesis; L-arginine from L-ornithine and carbamoyl phosphate: step 3/3. The sequence is that of Argininosuccinate lyase from Caulobacter sp. (strain K31).